Reading from the N-terminus, the 238-residue chain is ATP synthase subunit a (238 aa).

Helical transmembrane passes span 15–35, 76–96, 111–131, 167–187, and 208–230; these read IFNLTMLAMTLLIVGVIFVFI, YSLFFLCLFLFMVIANNLGLM, PTANLQYDLTLSFLVILLTHI, LALRIFGNIFAGEVMTSLLLL, and AFSVFISCIQAYVFTLLTSVYLG.

Belongs to the ATPase A chain family. In terms of assembly, F-type ATPases have 2 components, CF(1) - the catalytic core - and CF(0) - the membrane proton channel. CF(1) has five subunits: alpha(3), beta(3), gamma(1), delta(1), epsilon(1). CF(0) has three main subunits: a(1), b(2) and c(9-12). The alpha and beta chains form an alternating ring which encloses part of the gamma chain. CF(1) is attached to CF(0) by a central stalk formed by the gamma and epsilon chains, while a peripheral stalk is formed by the delta and b chains.

Its subcellular location is the cell membrane. Functionally, key component of the proton channel; it plays a direct role in the translocation of protons across the membrane. The sequence is that of ATP synthase subunit a from Streptococcus pneumoniae (strain ATCC BAA-255 / R6).